The chain runs to 105 residues: Protein LBH (105 aa).

Residues 18–104 form the LBH domain; the sequence is MTEVMMNTQP…CEETAKENKE (87 aa). A Phosphoserine modification is found at serine 63. The segment covering 86 to 96 has biased composition (acidic residues); sequence LVQEDEQDNCE. The disordered stretch occupies residues 86-105; sequence LVQEDEQDNCEETAKENKEQ.

The protein belongs to the LBH family. In terms of tissue distribution, highly expressed in heart, and expressed at low levels in placenta, lung, skeletal muscle, kidney and liver.

It localises to the nucleus. The protein resides in the cytoplasm. Transcriptional activator which may act in mitogen-activated protein kinase signaling pathway. This is Protein LBH from Homo sapiens (Human).